A 529-amino-acid chain; its full sequence is ATP synthase subunit alpha (529 aa).

Residue 173–180 participates in ATP binding; it reads GDRQTGKT.

This sequence belongs to the ATPase alpha/beta chains family. In terms of assembly, F-type ATPases have 2 components, CF(1) - the catalytic core - and CF(0) - the membrane proton channel. CF(1) has five subunits: alpha(3), beta(3), gamma(1), delta(1), epsilon(1). CF(0) has three main subunits: a(1), b(2) and c(9-12). The alpha and beta chains form an alternating ring which encloses part of the gamma chain. CF(1) is attached to CF(0) by a central stalk formed by the gamma and epsilon chains, while a peripheral stalk is formed by the delta and b chains.

It is found in the cell membrane. The catalysed reaction is ATP + H2O + 4 H(+)(in) = ADP + phosphate + 5 H(+)(out). Produces ATP from ADP in the presence of a proton gradient across the membrane. The alpha chain is a regulatory subunit. The sequence is that of ATP synthase subunit alpha from Streptomyces lividans.